The following is a 253-amino-acid chain: MAESAPRGFGRGGRGGRGRGRGRRGAKRDEEKEWVPVTKLGRLVKAGKIKSIEEIYLYSLPIKEYQIVDYFLPRLNDEVMKVVPVQKQTRAGQRTRFKAFVVIGDSDGHVGLGIKCAKEVATAIRGAIIMGKLSIMPIRRGYWGTALGDPHTVPVKVSGKCGSVTVRLVPAPRGAGLVAAPVTKRFLQLAGIEDCYTQSRGSTKTLGNFVKAAFAAASLTYGILTPNLWAERPFGQTPIEEYADILMQTEKKY.

Residues 1–30 (MAESAPRGFGRGGRGGRGRGRGRRGAKRDE) form a disordered region. Residues 14-26 (RGGRGRGRGRRGA) show a composition bias toward basic residues. The 64-residue stretch at 75-138 (LNDEVMKVVP…IMGKLSIMPI (64 aa)) folds into the S5 DRBM domain.

This sequence belongs to the universal ribosomal protein uS5 family. As to quaternary structure, component of the small ribosomal subunit (SSU). Mature yeast ribosomes consist of a small (40S) and a large (60S) subunit. The 40S small subunit contains 1 molecule of ribosomal RNA (18S rRNA) and at least 33 different proteins. The large 60S subunit contains 3 rRNA molecules (25S, 5.8S and 5S rRNA) and at least 46 different proteins. Interacts with snoRNA U3. Interacts with MPP10. Component of the ribosomal small subunit (SSU) processome composed of at least 40 protein subunits and snoRNA U3.

The protein localises to the cytoplasm. Functionally, component of the ribosome, a large ribonucleoprotein complex responsible for the synthesis of proteins in the cell. The small ribosomal subunit (SSU) binds messenger RNAs (mRNAs) and translates the encoded message by selecting cognate aminoacyl-transfer RNA (tRNA) molecules. The large subunit (LSU) contains the ribosomal catalytic site termed the peptidyl transferase center (PTC), which catalyzes the formation of peptide bonds, thereby polymerizing the amino acids delivered by tRNAs into a polypeptide chain. The nascent polypeptides leave the ribosome through a tunnel in the LSU and interact with protein factors that function in enzymatic processing, targeting, and the membrane insertion of nascent chains at the exit of the ribosomal tunnel. Plays a role in the assembly and function of the 40S ribosomal subunit. Mutations in this protein affects the control of translational fidelity. Involved in nucleolar processing of pre-18S ribosomal RNA and ribosome assembly. In terms of biological role, component of the ribosome, a large ribonucleoprotein complex responsible for the synthesis of proteins in the cell. The small ribosomal subunit (SSU) binds messenger RNAs (mRNAs) and translates the encoded message by selecting cognate aminoacyl-transfer RNA (tRNA) molecules. The large subunit (LSU) contains the ribosomal catalytic site termed the peptidyl transferase center (PTC), which catalyzes the formation of peptide bonds, thereby polymerizing the amino acids delivered by tRNAs into a polypeptide chain. The nascent polypeptides leave the ribosome through a tunnel in the LSU and interact with protein factors that function in enzymatic processing, targeting, and the membrane insertion of nascent chains at the exit of the ribosomal tunnel. uS5 is important for the assembly and function of the 40S ribosomal subunit. Mutations in this protein affects the control of translational fidelity. Involved in nucleolar processing of pre-18S ribosomal RNA and ribosome assembly. The chain is Small ribosomal subunit protein uS5 (rps2) from Schizosaccharomyces pombe (strain 972 / ATCC 24843) (Fission yeast).